Reading from the N-terminus, the 366-residue chain is Histidinol-phosphate aminotransferase (366 aa).

K228 is subject to N6-(pyridoxal phosphate)lysine.

This sequence belongs to the class-II pyridoxal-phosphate-dependent aminotransferase family. Histidinol-phosphate aminotransferase subfamily. As to quaternary structure, homodimer. Pyridoxal 5'-phosphate is required as a cofactor.

The catalysed reaction is L-histidinol phosphate + 2-oxoglutarate = 3-(imidazol-4-yl)-2-oxopropyl phosphate + L-glutamate. Its pathway is amino-acid biosynthesis; L-histidine biosynthesis; L-histidine from 5-phospho-alpha-D-ribose 1-diphosphate: step 7/9. This Corynebacterium diphtheriae (strain ATCC 700971 / NCTC 13129 / Biotype gravis) protein is Histidinol-phosphate aminotransferase.